The chain runs to 265 residues: Endochitinase At2g43580 (265 aa).

The first 24 residues, 1–24 (MALTKIFLILLLSLLGLYSETVKS), serve as a signal peptide directing secretion. The 35-residue stretch at 25 to 59 (QNCDCAPNLCCSQFGYCGTTADYCGSTCQSGPCRV) folds into the Chitin-binding type-1 domain. 4 disulfides stabilise this stretch: Cys27–Cys35, Cys29–Cys41, Cys34–Cys48, and Cys52–Cys57. The catalytic stretch occupies residues 67–265 (GLVGNIVTQI…GLDPGANITC (199 aa)). Residue Asn102 is glycosylated (N-linked (GlcNAc...) asparagine). Glu129 serves as the catalytic Proton donor. Asn262 carries an N-linked (GlcNAc...) asparagine glycan.

This sequence belongs to the glycosyl hydrolase 19 family. Chitinase class I subfamily.

The enzyme catalyses Random endo-hydrolysis of N-acetyl-beta-D-glucosaminide (1-&gt;4)-beta-linkages in chitin and chitodextrins.. The sequence is that of Endochitinase At2g43580 from Arabidopsis thaliana (Mouse-ear cress).